The following is a 248-amino-acid chain: NADH dehydrogenase [ubiquinone] flavoprotein 2, mitochondrial (248 aa).

Residues 1–31 (MFSLALRARASGLTAQWGRHARNLHKTAVQN) constitute a mitochondrion transit peptide. [2Fe-2S] cluster is bound by residues cysteine 134, cysteine 139, cysteine 175, and cysteine 179. Position 192 is a phosphotyrosine; by SRC (tyrosine 192). The tract at residues 229-248 (GLTSLTEPPKGPGFGVQAGL) is disordered.

Belongs to the complex I 24 kDa subunit family. As to quaternary structure, core subunit of respiratory chain NADH dehydrogenase (Complex I) which is composed of 45 different subunits. This is a component of the flavoprotein-sulfur (FP) fragment of the enzyme. Requires [2Fe-2S] cluster as cofactor.

The protein localises to the mitochondrion inner membrane. It carries out the reaction a ubiquinone + NADH + 5 H(+)(in) = a ubiquinol + NAD(+) + 4 H(+)(out). Functionally, core subunit of the mitochondrial membrane respiratory chain NADH dehydrogenase (Complex I) which catalyzes electron transfer from NADH through the respiratory chain, using ubiquinone as an electron acceptor. Parts of the peripheral arm of the enzyme, where the electrons from NADH are accepted by flavin mononucleotide (FMN) and then passed along a chain of iron-sulfur clusters by electron tunnelling to the final acceptor ubiquinone. Contains one iron-sulfur cluster. The protein is NADH dehydrogenase [ubiquinone] flavoprotein 2, mitochondrial of Rattus norvegicus (Rat).